Consider the following 116-residue polypeptide: Iron-sulfur cluster insertion protein ErpA (116 aa).

Iron-sulfur cluster-binding residues include Cys-44, Cys-108, and Cys-110.

The protein belongs to the HesB/IscA family. Homodimer. Iron-sulfur cluster is required as a cofactor.

Required for insertion of 4Fe-4S clusters for at least IspG. This Pseudomonas syringae pv. syringae (strain B728a) protein is Iron-sulfur cluster insertion protein ErpA.